Consider the following 340-residue polypeptide: Organic solute transporter subunit alpha (340 aa).

The Extracellular segment spans residues 1–52 (MEPDRTQIRLDPRYTADLLEILKTNYSVPSACFSYPPTAAQLLRALGPVDIS). An N-linked (GlcNAc...) asparagine glycan is attached at asparagine 25. A helical membrane pass occupies residues 53–73 (LMVIMTLFVLGSIAIFLEAAV). Residues 74 to 87 (YLHKNTRCPIKRKT) lie on the Cytoplasmic side of the membrane. The helical transmembrane segment at 88–108 (LIWCSSSPTIVSAFSCFGLWI) threads the bilayer. Over 109 to 110 (PR) the chain is Extracellular. A helical transmembrane segment spans residues 111 to 131 (ALTLVEMAITTFYSMCFYLLM). At 132–186 (QAMVEGFGGKEAVLRTLKDTPVMIHTGPCCCCCPCCPRIKITRKRLQLLLLGPIQ) the chain is on the cytoplasmic side. The helical transmembrane segment at 187–207 (YAFFKISLTLVGLFLIPDGIF) threads the bilayer. The Extracellular portion of the chain corresponds to 208–219 (DPSDISEGSTAL). Residues 220–240 (WINTFLGVSTLSALWTIGIIF) traverse the membrane as a helical segment. Residues 241-255 (RQARLHLGEQNIGAK) are Cytoplasmic-facing. Residues 256–276 (FVLFQALLILSALQPSIFSVL) form a helical membrane-spanning segment. Residues 277–295 (ASGGQIACSPPFSSKIRSQ) are Extracellular-facing. A helical transmembrane segment spans residues 296-316 (VMNCHLLILESFLITVLTRIY). Residues 317 to 340 (YRRKDDKLGYEPFSSPDQDLNLKA) are Cytoplasmic-facing. The residue at position 330 (serine 330) is a Phosphoserine.

It belongs to the OST-alpha family. In terms of assembly, interacts with SLC51B. The Ost-alpha/Ost-beta complex is a heterodimer composed of alpha (SLC51A) and beta (SLC51B) subunit.

The protein localises to the cell membrane. It is found in the endoplasmic reticulum membrane. The catalysed reaction is taurocholate(out) = taurocholate(in). It catalyses the reaction estrone 3-sulfate(out) = estrone 3-sulfate(in). The enzyme catalyses dehydroepiandrosterone 3-sulfate(out) = dehydroepiandrosterone 3-sulfate(in). It carries out the reaction tauroursodeoxycholate(out) = tauroursodeoxycholate(in). The catalysed reaction is glycoursodeoxycholate(out) = glycoursodeoxycholate(in). It catalyses the reaction glycocholate(out) = glycocholate(in). The enzyme catalyses taurochenodeoxycholate(out) = taurochenodeoxycholate(in). It carries out the reaction glycochenodeoxycholate(out) = glycochenodeoxycholate(in). The catalysed reaction is taurodeoxycholate(out) = taurodeoxycholate(in). It catalyses the reaction glycodeoxycholate(out) = glycodeoxycholate(in). The enzyme catalyses prostaglandin E2(out) = prostaglandin E2(in). In terms of biological role, essential component of the Ost-alpha/Ost-beta complex, a heterodimer that acts as the intestinal basolateral transporter responsible for bile acid export from enterocytes into portal blood. Efficiently transports the major species of bile acids (taurocholate). Taurine conjugates are transported more efficiently across the basolateral membrane than glycine-conjugated bile acids. Can also transport steroids such as estrone 3-sulfate and dehydroepiandrosterone 3-sulfate, therefore playing a role in the enterohepatic circulation of sterols. Able to transport eicosanoids such as prostaglandin E2. This Bos taurus (Bovine) protein is Organic solute transporter subunit alpha (SLC51A).